The primary structure comprises 622 residues: uncharacterized protein (622 aa).

[4Fe-4S] cluster contacts are provided by Cys-302, Cys-306, Cys-310, and Cys-521.

This sequence belongs to the AOR/FOR family. It depends on [4Fe-4S] cluster as a cofactor.

This is an uncharacterized protein from Methanocaldococcus jannaschii (strain ATCC 43067 / DSM 2661 / JAL-1 / JCM 10045 / NBRC 100440) (Methanococcus jannaschii).